Consider the following 1235-residue polypeptide: Ubiquitin carboxyl-terminal hydrolase 40 (1235 aa).

The 442-residue stretch at 41–482 (SGIRNQGGTC…SAYMLFYRKA (442 aa)) folds into the USP domain. The active-site Nucleophile is Cys50. Catalysis depends on His305, which acts as the Proton acceptor.

It belongs to the peptidase C19 family.

It catalyses the reaction Thiol-dependent hydrolysis of ester, thioester, amide, peptide and isopeptide bonds formed by the C-terminal Gly of ubiquitin (a 76-residue protein attached to proteins as an intracellular targeting signal).. The polypeptide is Ubiquitin carboxyl-terminal hydrolase 40 (Usp40) (Mus musculus (Mouse)).